The following is a 478-amino-acid chain: Probable sodium/glutamine symporter GlnT (478 aa).

A run of 10 helical transmembrane segments spans residues 14-34 (DLLW…YFTF), 85-105 (IAIA…IIAI), 145-165 (WMGA…FNSV), 185-205 (LGLI…KRIA), 211-231 (IVVV…FSNI), 236-256 (GVLA…GGAL), 298-318 (AFGV…IILF), 342-362 (GSWA…CALI), 381-401 (LIFV…VAKV), and 411-431 (FMGL…KVVF).

It belongs to the alanine or glycine:cation symporter (AGCS) (TC 2.A.25) family.

It is found in the cell membrane. Its function is as follows. Probably functions as a sodium/glutamine symporter for glutamine uptake. This is Probable sodium/glutamine symporter GlnT (glnT) from Bacillus subtilis (strain 168).